The chain runs to 350 residues: GTPase Obg (350 aa).

The region spanning 1-159 (MKLVDEAEIE…RTLKLELKLL (159 aa)) is the Obg domain. The tract at residues 127–147 (NMHFKSSTNRSPRQALPGEPG) is disordered. Residues 160–337 (ADVGLLGFPN…IMSRIMAFFD (178 aa)) form the OBG-type G domain. GTP contacts are provided by residues 166–173 (GFPNAGKS), 191–195 (FTTLY), 213–216 (DIPG), 287–290 (NKAD), and 318–320 (SAL). Residues Ser173 and Thr193 each coordinate Mg(2+).

It belongs to the TRAFAC class OBG-HflX-like GTPase superfamily. OBG GTPase family. Monomer. The cofactor is Mg(2+).

It localises to the cytoplasm. Functionally, an essential GTPase which binds GTP, GDP and possibly (p)ppGpp with moderate affinity, with high nucleotide exchange rates and a fairly low GTP hydrolysis rate. Plays a role in control of the cell cycle, stress response, ribosome biogenesis and in those bacteria that undergo differentiation, in morphogenesis control. This is GTPase Obg from Stenotrophomonas maltophilia (strain R551-3).